The primary structure comprises 272 residues: Replication-associated protein A (272 aa).

The CRESS-DNA virus Rep endonuclease domain occupies 11–114 (SHRNVNTFLT…PLAVFERGTF (104 aa)). Positions 18 to 21 (FLTY) match the RCR-1 motif. Positions 52, 60, and 62 each coordinate a divalent metal cation. The short motif at 60 to 62 (HLH) is the RCR-2 element. Tyr-100 serves as the catalytic For DNA cleavage activity. The RCR-3 signature appears at 100–103 (YILK). Residue Glu-104 coordinates a divalent metal cation. The segment covering 119 to 128 (SSFQGNPSKG) has biased composition (polar residues). The disordered stretch occupies residues 119-138 (SSFQGNPSKGNSEKKPSKDE). Basic and acidic residues predominate over residues 129–138 (NSEKKPSKDE). An oligomerization region spans residues 175-187 (SANKLFPEIQEEF). Positions 198–202 (LLCNE) match the LXCXE motif, interaction with host RBR1 motif. A transactivation region spans residues 221-230 (MLLQPTCYTL). Residues 245–264 (SQQMKEQESRASTSSVQQEL) are compositionally biased toward polar residues. Residues 245-272 (SQQMKEQESRASTSSVQQELGNLLGPEA) form a disordered region.

Belongs to the geminiviridae Rep protein family. Homooligomer. Interacts (via LXCXE domain) with host retinoblastoma-related protein 1 (RBR1), and may thereby deregulate the host cell cycle. Part of the C- and V-complexes which are RepA-Rep-DNA complexes involved in the c-sense and v-sense transcription. Mg(2+) is required as a cofactor. Requires Mn(2+) as cofactor.

The protein localises to the host nucleus. Its subcellular location is the host cytoplasm. Functionally, implicated in enhancement of V-sense gene expression. Acts a an inhibitor of C-sense gene transcription. This is Replication-associated protein A from Avena sativa (Oat).